The primary structure comprises 147 residues: 3-dehydroquinate dehydratase (147 aa).

The Proton acceptor role is filled by Tyr24. 3 residues coordinate substrate: Asn74, His80, and Asp87. The active-site Proton donor is the His100. Substrate-binding positions include Leu101 to Ser102 and Arg111.

The protein belongs to the type-II 3-dehydroquinase family. In terms of assembly, homododecamer.

The enzyme catalyses 3-dehydroquinate = 3-dehydroshikimate + H2O. The protein operates within metabolic intermediate biosynthesis; chorismate biosynthesis; chorismate from D-erythrose 4-phosphate and phosphoenolpyruvate: step 3/7. Catalyzes a trans-dehydration via an enolate intermediate. This is 3-dehydroquinate dehydratase from Azorhizobium caulinodans (strain ATCC 43989 / DSM 5975 / JCM 20966 / LMG 6465 / NBRC 14845 / NCIMB 13405 / ORS 571).